A 140-amino-acid chain; its full sequence is Lipoprotein MlpD (140 aa).

The signal sequence occupies residues 1 to 17 (MKIINILFCLFLLMLNG). Cys18 is lipidated: N-palmitoyl cysteine. Residue Cys18 is the site of S-diacylglycerol cysteine attachment. A disordered region spans residues 22–53 (DTNNSQTKSRQKRDLTQKEATQEKPKSKEELL). A compositionally biased stretch (basic and acidic residues) spans 33–53 (KRDLTQKEATQEKPKSKEELL).

Belongs to the Multicopy lipoprotein (Mlp) family.

It is found in the cell outer membrane. Functionally, an outer membrane protein that may participate in pathogenesis. Some human Lyme disease patients have antibodies against this protein. The Mlp proteins probably undergo intragenic recombination, generating new alleles. The protein is Lipoprotein MlpD of Borreliella burgdorferi (strain ATCC 35210 / DSM 4680 / CIP 102532 / B31) (Borrelia burgdorferi).